The chain runs to 533 residues: Lanosterol 14-alpha demethylase (533 aa).

Residue Cys472 participates in heme binding.

It belongs to the cytochrome P450 family. It depends on heme as a cofactor.

Its subcellular location is the membrane. The enzyme catalyses a 14alpha-methyl steroid + 3 reduced [NADPH--hemoprotein reductase] + 3 O2 = a Delta(14) steroid + formate + 3 oxidized [NADPH--hemoprotein reductase] + 4 H2O + 4 H(+). The catalysed reaction is a 14alpha-methyl steroid + reduced [NADPH--hemoprotein reductase] + O2 = a 14alpha-hydroxymethyl steroid + oxidized [NADPH--hemoprotein reductase] + H2O + H(+). It catalyses the reaction a 14alpha-hydroxymethyl steroid + reduced [NADPH--hemoprotein reductase] + O2 = a 14alpha-formyl steroid + oxidized [NADPH--hemoprotein reductase] + 2 H2O + H(+). It carries out the reaction a 14alpha-formyl steroid + reduced [NADPH--hemoprotein reductase] + O2 = a Delta(14) steroid + formate + oxidized [NADPH--hemoprotein reductase] + H2O + 2 H(+). The enzyme catalyses lanosterol + 3 reduced [NADPH--hemoprotein reductase] + 3 O2 = 4,4-dimethyl-5alpha-cholesta-8,14,24-trien-3beta-ol + formate + 3 oxidized [NADPH--hemoprotein reductase] + 4 H2O + 4 H(+). The catalysed reaction is lanosterol + reduced [NADPH--hemoprotein reductase] + O2 = 32-hydroxylanosterol + oxidized [NADPH--hemoprotein reductase] + H2O + H(+). It catalyses the reaction 32-hydroxylanosterol + reduced [NADPH--hemoprotein reductase] + O2 = 32-oxolanosterol + oxidized [NADPH--hemoprotein reductase] + 2 H2O + H(+). It carries out the reaction 32-oxolanosterol + reduced [NADPH--hemoprotein reductase] + O2 = 4,4-dimethyl-5alpha-cholesta-8,14,24-trien-3beta-ol + formate + oxidized [NADPH--hemoprotein reductase] + H2O + 2 H(+). The enzyme catalyses eburicol + 3 reduced [NADPH--hemoprotein reductase] + 3 O2 = 14-demethyleburicol + formate + 3 oxidized [NADPH--hemoprotein reductase] + 4 H2O + 4 H(+). The catalysed reaction is eburicol + reduced [NADPH--hemoprotein reductase] + O2 = 32-hydroxyeburicol + oxidized [NADPH--hemoprotein reductase] + H2O + H(+). It catalyses the reaction 32-hydroxyeburicol + reduced [NADPH--hemoprotein reductase] + O2 = 32-oxoeburicol + oxidized [NADPH--hemoprotein reductase] + 2 H2O + H(+). It carries out the reaction 32-oxoeburicol + reduced [NADPH--hemoprotein reductase] + O2 = 14-demethyleburicol + formate + oxidized [NADPH--hemoprotein reductase] + H2O + 2 H(+). The protein operates within steroid biosynthesis; zymosterol biosynthesis; zymosterol from lanosterol: step 1/6. Sterol 14alpha-demethylase that plays a critical role in the third module of ergosterol biosynthesis pathway, being ergosterol the major sterol component in fungal membranes that participates in a variety of functions. The third module or late pathway involves the ergosterol synthesis itself through consecutive reactions that mainly occur in the endoplasmic reticulum (ER) membrane. In filamentous fungi, during the initial step of this module, lanosterol (lanosta-8,24-dien-3beta-ol) can be metabolized to eburicol. Sterol 14alpha-demethylase catalyzes the three-step oxidative removal of the 14alpha-methyl group (C-32) of both these sterols in the form of formate, and converts eburicol and lanosterol to 14-demethyleburicol (4,4,24-trimethylergosta-8,14,24(28)-trienol) and 4,4-dimethyl-5alpha-cholesta-8,14,24-trien-3beta-ol, respectively, which are further metabolized by other enzymes in the pathway to ergosterol. Can also use substrates not intrinsic to fungi, such as 24,25-dihydrolanosterol (DHL), producing 4,4-dimethyl-8,14-cholestadien-3-beta-ol, but at lower rates than the endogenous substrates. The polypeptide is Lanosterol 14-alpha demethylase (ERG11) (Candida glabrata (strain ATCC 2001 / BCRC 20586 / JCM 3761 / NBRC 0622 / NRRL Y-65 / CBS 138) (Yeast)).